The primary structure comprises 138 residues: Large ribosomal subunit protein uL14 (138 aa).

This sequence belongs to the universal ribosomal protein uL14 family. As to quaternary structure, part of the 50S ribosomal subunit. Forms a cluster with proteins L3 and L24e, part of which may contact the 16S rRNA in 2 intersubunit bridges. Contacts initiation factor aIF-6.

Its subcellular location is the cytoplasm. Its function is as follows. Binds to 23S rRNA. Forms part of two intersubunit bridges in the 70S ribosome. The protein is Large ribosomal subunit protein uL14 of Saccharolobus solfataricus (strain ATCC 35092 / DSM 1617 / JCM 11322 / P2) (Sulfolobus solfataricus).